Consider the following 361-residue polypeptide: Caspase activity and apoptosis inhibitor 1 (361 aa).

Positions 1–14 are enriched in basic residues; sequence MTGKKSSREKRRKR. Disordered stretches follow at residues 1–28 and 67–100; these read MTGK…APDI and GGSG…GSLQ. Residues 19-28 are compositionally biased toward low complexity; that stretch reads AAAALAAPDI. Residue S89 is modified to Phosphoserine. T90 carries the post-translational modification Phosphothreonine. K104 participates in a covalent cross-link: Glycyl lysine isopeptide (Lys-Gly) (interchain with G-Cter in SUMO2). 2 positions are modified to phosphoserine: S120 and S203. Disordered regions lie at residues 198–218 and 230–331; these read DNGM…MGSD and ASSV…DVQP. A compositionally biased stretch (acidic residues) spans 199-210; sequence NGMDSDMEEEAD. Basic and acidic residues predominate over residues 234–251; the sequence is RENKQPEGLELKQGKGED. Residues 272–281 show a composition bias toward low complexity; it reads EEAAAPEAPE. The stretch at 281–311 forms a coiled coil; it reads ENTVQSEAGQIDDLEKDIEKSVNEILGLAES. Residue S312 is modified to Phosphoserine.

Ubiquitous.

Its function is as follows. Anti-apoptotic protein that modulates a caspase-10 dependent mitochondrial caspase-3/9 feedback amplification loop. This is Caspase activity and apoptosis inhibitor 1 (CAAP1) from Homo sapiens (Human).